Consider the following 692-residue polypeptide: Peroxisomal primary amine oxidase (692 aa).

Positions 1–22 (MERLRQIASQATAASAAPARPA) are enriched in low complexity. Residues 1–26 (MERLRQIASQATAASAAPARPAHPLD) are disordered. A glycan (N-linked (GlcNAc...) asparagine) is linked at N243. 317–328 (ALDIGEYGAGYM) contributes to the substrate binding site. The Proton acceptor role is filled by D319. C338 and C364 form a disulfide bridge. Residue 402–407 (AANYEY) participates in substrate binding. Residue Y405 is the Schiff-base intermediate with substrate; via topaquinone of the active site. At Y405 the chain carries 2',4',5'-topaquinone. 2 residues coordinate Cu cation: H456 and H458. Mn(2+) is bound by residues D465, D613, and I614. H624 provides a ligand contact to Cu cation.

This sequence belongs to the copper/topaquinone oxidase family. In terms of assembly, homodimer. The cofactor is Cu cation. It depends on Zn(2+) as a cofactor. L-topaquinone serves as cofactor. Requires Mn(2+) as cofactor. In terms of processing, topaquinone (TPQ) is generated by copper-dependent autoxidation of a specific tyrosyl residue.

The protein resides in the peroxisome. The enzyme catalyses a primary methyl amine + O2 + H2O = an aldehyde + H2O2 + NH4(+). The protein is Peroxisomal primary amine oxidase (AMO) of Pichia angusta (Yeast).